Here is a 423-residue protein sequence, read N- to C-terminus: Lipoamide acyltransferase component of branched-chain alpha-keto acid dehydrogenase complex (423 aa).

A Lipoyl-binding domain is found at 3 to 78 (THVIKMPDIG…AVGSELIRIE (76 aa)). An N6-lipoyllysine modification is found at Lys44. Residues 137–174 (LASPAVRKRALDAGIELRYVHGSGPAGRILHEDLDAFM) enclose the Peripheral subunit-binding (PSBD) domain. Residues His395 and Asp399 contribute to the active site.

It belongs to the 2-oxoacid dehydrogenase family. In terms of assembly, forms a 24-polypeptide structural core with octahedral symmetry. The cofactor is (R)-lipoate.

The enzyme catalyses N(6)-[(R)-dihydrolipoyl]-L-lysyl-[protein] + 2-methylpropanoyl-CoA = N(6)-[(R)-S(8)-2-methylpropanoyldihydrolipoyl]-L-lysyl-[protein] + CoA. The branched-chain alpha-keto dehydrogenase complex catalyzes the overall conversion of alpha-keto acids to acyl-CoA and CO(2). It contains multiple copies of three enzymatic components: branched-chain alpha-keto acid decarboxylase (E1), lipoamide acyltransferase (E2) and lipoamide dehydrogenase (E3). The polypeptide is Lipoamide acyltransferase component of branched-chain alpha-keto acid dehydrogenase complex (bkdB) (Pseudomonas putida (Arthrobacter siderocapsulatus)).